Reading from the N-terminus, the 300-residue chain is Chaperone protein dnaJ 50 (300 aa).

A signal peptide spans 1 to 27 (MAPPVTERWCLALILLFLSLFVQSSTA). Topologically, residues 28-122 (IYCGAEDCYA…RAKYGHKSDP (95 aa)) are lumenal. Residues 34-98 (DCYALLGVAQ…TTRAQYDYAI (65 aa)) enclose the J domain. Residues asparagine 46 and asparagine 88 are each glycosylated (N-linked (GlcNAc...) asparagine). The helical transmembrane segment at 123–143 (RAVLVGLLVVLSAFQYLNNVA) threads the bilayer. Over 144–206 (RYNEAIATVK…LQIKGAEKPS (63 aa)) the chain is Cytoplasmic. The chain crosses the membrane as a helical span at residues 207 to 227 (VWELLGVRFILLPYTIIKLLV). Residues 228-300 (WYSSWVWRYK…EMRKESKRRR (73 aa)) lie on the Lumenal side of the membrane.

As to expression, expressed in leaves, flower buds and flowers.

It localises to the endoplasmic reticulum membrane. Its function is as follows. May play a role in protein folding in the endoplasmic reticulum. This is Chaperone protein dnaJ 50 (C50) from Arabidopsis thaliana (Mouse-ear cress).